The sequence spans 279 residues: Pleckstrin homology domain-containing family F member 1 (279 aa).

In terms of domain architecture, PH spans 35-131 (VLLGEGVLTK…WISHIEECVR (97 aa)). Residues 152-212 (DKATDICMRC…VCSLCYRELA (61 aa)) form an FYVE-type zinc finger. C158, C161, C175, C178, C183, C186, C204, and C207 together coordinate Zn(2+). Positions 219 to 264 (EAKERFRGSPGQLTHLGSTMCGASSGDDDDSDEDREGSGDGDWPTQ) are disordered. Residues 244–253 (GDDDDSDEDR) are compositionally biased toward acidic residues.

The protein resides in the nucleus. The protein localises to the cytoplasm. It is found in the perinuclear region. Its subcellular location is the lysosome. Functionally, may induce apoptosis through the lysosomal-mitochondrial pathway. Translocates to the lysosome initiating the permeabilization of lysosomal membrane (LMP) and resulting in the release of CTSD and CTSL to the cytoplasm. Triggers the caspase-independent apoptosis by altering mitochondrial membrane permeabilization (MMP) resulting in the release of PDCD8. This Rattus norvegicus (Rat) protein is Pleckstrin homology domain-containing family F member 1 (Plekhf1).